The chain runs to 441 residues: Protein translocase subunit SecY (441 aa).

10 helical membrane-spanning segments follow: residues 25 to 45 (YFVI…IPGI), 78 to 98 (IFAL…ILTL), 126 to 146 (LILA…IPGL), 155 to 175 (ISFY…LMWL), 184 to 204 (IGNG…PSSF), 218 to 238 (VLLF…VVYI), 275 to 295 (VIPA…ASWF), 318 to 338 (YILT…GLAF), 376 to 396 (FLGS…RFFM), and 398 to 418 (VPFY…IDFI).

Belongs to the SecY/SEC61-alpha family. Component of the Sec protein translocase complex. Heterotrimer consisting of SecY, SecE and SecG subunits. The heterotrimers can form oligomers, although 1 heterotrimer is thought to be able to translocate proteins. Interacts with the ribosome. Interacts with SecDF, and other proteins may be involved. Interacts with SecA.

It is found in the cell membrane. In terms of biological role, the central subunit of the protein translocation channel SecYEG. Consists of two halves formed by TMs 1-5 and 6-10. These two domains form a lateral gate at the front which open onto the bilayer between TMs 2 and 7, and are clamped together by SecE at the back. The channel is closed by both a pore ring composed of hydrophobic SecY resides and a short helix (helix 2A) on the extracellular side of the membrane which forms a plug. The plug probably moves laterally to allow the channel to open. The ring and the pore may move independently. This Buchnera aphidicola subsp. Baizongia pistaciae (strain Bp) protein is Protein translocase subunit SecY.